Reading from the N-terminus, the 408-residue chain is Phosphoenolpyruvate/phosphate translocator 1, chloroplastic (408 aa).

The transit peptide at 1-66 (MQSAAAVGLL…ISARRIGLVP (66 aa)) directs the protein to the chloroplast. 7 consecutive transmembrane segments (helical) span residues 105–125 (TLQLGALFGLWYLFNIYFNIY), 139–159 (ITNVQFAVGTVIALFMWITGI), 165–185 (ISGAQLAAILPLAMVHTMGNL), 222–242 (PTPFVVLSLVPIVGGVALASL), 245–262 (ASFNWAGFWSAMASNVTF), 283–303 (ITLFSIITVMSFFLLAPVTLL), and 375–395 (TPVSPINSLGTGVALAGVFLY). The EamA domain maps to 124 to 241 (IYNKQVLKVF…PIVGGVALAS (118 aa)).

The protein belongs to the TPT transporter family. PPT (TC 2.A.7.9) subfamily.

It localises to the plastid. The protein localises to the chloroplast membrane. Its function is as follows. Phosphoenolpyruvate/phosphate translocator that transports phosphoenolpyruvate (PEP) and dihydroxyacetone phosphate. This is Phosphoenolpyruvate/phosphate translocator 1, chloroplastic (PPT1) from Oryza sativa subsp. japonica (Rice).